A 158-amino-acid chain; its full sequence is Dysbindin domain-containing protein 1 (158 aa).

2 disordered regions span residues 1 to 50 (MEPP…VPAP) and 93 to 158 (ADSD…PQED). Ser-95 and Ser-119 each carry phosphoserine. A compositionally biased stretch (basic and acidic residues) spans 125–141 (TRAEQSHEKQPLGDPER).

It belongs to the dysbindin family.

The polypeptide is Dysbindin domain-containing protein 1 (DBNDD1) (Homo sapiens (Human)).